Here is a 1031-residue protein sequence, read N- to C-terminus: Putative glycine dehydrogenase (decarboxylating), mitochondrial (1031 aa).

The N-terminal 49 residues, 1–49, are a transit peptide targeting the mitochondrion; that stretch reads MFDSFMKRNQLALIMFRACSKLQYHGVNTSLSRHLFLAKRNLSISSACL. Residue Lys-783 is modified to N6-(pyridoxal phosphate)lysine.

The protein belongs to the GcvP family. Requires pyridoxal 5'-phosphate as cofactor.

It is found in the mitochondrion. The enzyme catalyses N(6)-[(R)-lipoyl]-L-lysyl-[glycine-cleavage complex H protein] + glycine + H(+) = N(6)-[(R)-S(8)-aminomethyldihydrolipoyl]-L-lysyl-[glycine-cleavage complex H protein] + CO2. Functionally, the glycine cleavage system catalyzes the degradation of glycine. The P protein binds the alpha-amino group of glycine through its pyridoxal phosphate cofactor; CO(2) is released and the remaining methylamine moiety is then transferred to the lipoamide cofactor of the H protein. This is Putative glycine dehydrogenase (decarboxylating), mitochondrial (gcv2) from Schizosaccharomyces pombe (strain 972 / ATCC 24843) (Fission yeast).